The chain runs to 141 residues: Protein MGF 100-2L (141 aa).

This sequence belongs to the asfivirus MGF 100 family.

In terms of biological role, plays a role in virus cell tropism, and may be required for efficient virus replication in macrophages. This chain is Protein MGF 100-2L, found in African swine fever virus (isolate Pig/Kenya/KEN-50/1950) (ASFV).